The primary structure comprises 155 residues: Ribonuclease H (155 aa).

The RNase H type-1 domain occupies Q4–A145. Mg(2+) contacts are provided by D13, E51, D73, and D137.

This sequence belongs to the RNase H family. As to quaternary structure, monomer. The cofactor is Mg(2+).

It is found in the cytoplasm. It carries out the reaction Endonucleolytic cleavage to 5'-phosphomonoester.. Endonuclease that specifically degrades the RNA of RNA-DNA hybrids. The protein is Ribonuclease H of Bartonella tribocorum (strain CIP 105476 / IBS 506).